A 299-amino-acid chain; its full sequence is Taste receptor type 2 member 16 (299 aa).

Over 1 to 5 the chain is Extracellular; that stretch reads MVPTQ. A helical transmembrane segment spans residues 6-26; it reads VTIFSIIMYVLESLVIIVQSC. At 27-47 the chain is on the cytoplasmic side; sequence TTVAVLFREWMHFQRLSPVET. The helical transmembrane segment at 48-68 threads the bilayer; the sequence is ILISLGISHFCLQWTSMLYNF. Residues 69–82 lie on the Extracellular side of the membrane; sequence GTYSRPVLLFWKVS. A helical membrane pass occupies residues 83 to 103; that stretch reads VVWEFMNILTFWLTSWLAVLY. Topologically, residues 104-125 are cytoplasmic; it reads CVKVSSFTHPIFLWLRMKILKL. The helical transmembrane segment at 126 to 146 threads the bilayer; the sequence is VLWLILGALIASCLSIIPSVV. Topologically, residues 147 to 183 are extracellular; the sequence is KYHIQMELVTLDNLPKNNSLILRLQQFEWYFSNPLKM. Asn163 carries an N-linked (GlcNAc...) asparagine glycan. A helical membrane pass occupies residues 184–204; that stretch reads IGFGIPFFVFLASIILLTVSL. Topologically, residues 205-233 are cytoplasmic; that stretch reads VQHWVQMKHYSSSNSSLKAQFTVLKSLAT. Residues 234–254 form a helical membrane-spanning segment; the sequence is FFTFFTSYFLTIVISFIGTVF. The Extracellular portion of the chain corresponds to 255-258; it reads DKKS. The chain crosses the membrane as a helical span at residues 259–279; that stretch reads WFWVCEAVIYGLVCIHFTSLM. Over 280–299 the chain is Cytoplasmic; sequence MSNPALKKALKLQFWSPEPS.

The protein belongs to the G-protein coupled receptor T2R family. In terms of assembly, interacts with RTP3 and RTP4.

It localises to the cell membrane. Gustducin-coupled receptor implicated in the perception of bitter compounds in the oral cavity and the gastrointestinal tract. Signals through PLCB2 and the calcium-regulated cation channel TRPM5. The sequence is that of Taste receptor type 2 member 16 (Tas2r16) from Mus musculus (Mouse).